Here is a 653-residue protein sequence, read N- to C-terminus: Acetyl-coenzyme A synthetase (653 aa).

CoA-binding positions include 196-199 (RGGK) and Thr315. ATP-binding positions include 391–393 (GEP), 415–420 (DTWWQT), Asp506, and Arg521. Position 529 (Ser529) interacts with CoA. ATP is bound at residue Arg532. Val543 and Val548 together coordinate Mg(2+). N6-acetyllysine is present on Lys618.

It belongs to the ATP-dependent AMP-binding enzyme family. Mg(2+) is required as a cofactor. Acetylated. Deacetylation by the SIR2-homolog deacetylase activates the enzyme.

The catalysed reaction is acetate + ATP + CoA = acetyl-CoA + AMP + diphosphate. Its function is as follows. Catalyzes the conversion of acetate into acetyl-CoA (AcCoA), an essential intermediate at the junction of anabolic and catabolic pathways. AcsA undergoes a two-step reaction. In the first half reaction, AcsA combines acetate with ATP to form acetyl-adenylate (AcAMP) intermediate. In the second half reaction, it can then transfer the acetyl group from AcAMP to the sulfhydryl group of CoA, forming the product AcCoA. In Laribacter hongkongensis (strain HLHK9), this protein is Acetyl-coenzyme A synthetase.